We begin with the raw amino-acid sequence, 391 residues long: S-adenosylmethionine synthase 1 (391 aa).

Position 9 (E9) interacts with Mg(2+). An ATP-binding site is contributed by H15. E43 serves as a coordination point for K(+). E56 and Q99 together coordinate L-methionine. Residues 167–169, 235–238, D246, 252–253, A269, K273, and K277 each bind ATP; these read DGK, SGRF, and RK. L-methionine is bound at residue D246. K277 is an L-methionine binding site.

The protein belongs to the AdoMet synthase family. In terms of assembly, homotetramer. It depends on Mn(2+) as a cofactor. Mg(2+) is required as a cofactor. Requires Co(2+) as cofactor. K(+) serves as cofactor.

It localises to the cytoplasm. It catalyses the reaction L-methionine + ATP + H2O = S-adenosyl-L-methionine + phosphate + diphosphate. The protein operates within amino-acid biosynthesis; S-adenosyl-L-methionine biosynthesis; S-adenosyl-L-methionine from L-methionine: step 1/1. Catalyzes the formation of S-adenosylmethionine from methionine and ATP. The reaction comprises two steps that are both catalyzed by the same enzyme: formation of S-adenosylmethionine (AdoMet) and triphosphate, and subsequent hydrolysis of the triphosphate. This Vitis vinifera (Grape) protein is S-adenosylmethionine synthase 1 (METK1).